The sequence spans 552 residues: Putative transport protein APL_0966 (552 aa).

5 helical membrane-spanning segments follow: residues Ile-4–Ile-24, Val-29–Leu-49, Phe-65–Ser-85, Gly-95–Phe-115, and Ile-161–Phe-181. 2 consecutive RCK C-terminal domains span residues Gln-190–Glu-275 and Ala-277–Asp-360. The next 6 membrane-spanning stretches (helical) occupy residues Met-370–Ile-390, Ala-402–Phe-424, Ile-438–Leu-458, Leu-463–Val-483, Tyr-492–Ala-512, and Val-529–Trp-549.

It belongs to the AAE transporter (TC 2.A.81) family. YidE subfamily.

It is found in the cell membrane. The sequence is that of Putative transport protein APL_0966 from Actinobacillus pleuropneumoniae serotype 5b (strain L20).